The following is a 150-amino-acid chain: uncharacterized protein (150 aa).

Belongs to the OsmC/Ohr family.

This is an uncharacterized protein from Bacillus subtilis (strain 168).